The sequence spans 267 residues: Methylglyoxal reductase DkgB (267 aa).

Catalysis depends on Tyr-39, which acts as the Proton donor. His-97 provides a ligand contact to substrate. 179–231 contributes to the NADP(+) binding site; that stretch reads MTLAYGKALAEPVIKTIAEQHGATPAQVILSWAMQLGYGVIPSSTKAANLASN.

The protein belongs to the aldo/keto reductase family. In terms of assembly, monomer.

Its subcellular location is the cytoplasm. The enzyme catalyses hydroxyacetone + NADP(+) = methylglyoxal + NADPH + H(+). Functionally, aldo-keto reductase that significantly contributes to cellular methylglyoxal detoxification by catalyzing the NADPH-dependent conversion of methylglyoxal to acetol. This is Methylglyoxal reductase DkgB from Yersinia pestis.